The following is a 590-amino-acid chain: Aspartate--tRNA(Asp/Asn) ligase (590 aa).

Glu176 lines the L-aspartate pocket. The segment at Gln200 to Lys203 is aspartate. 2 residues coordinate L-aspartate: Arg222 and His451. Arg222–Glu224 serves as a coordination point for ATP. ATP is bound at residue Glu485. Arg492 contributes to the L-aspartate binding site. An ATP-binding site is contributed by Gly537 to Arg540.

It belongs to the class-II aminoacyl-tRNA synthetase family. Type 1 subfamily. As to quaternary structure, homodimer.

It is found in the cytoplasm. The catalysed reaction is tRNA(Asx) + L-aspartate + ATP = L-aspartyl-tRNA(Asx) + AMP + diphosphate. In terms of biological role, aspartyl-tRNA synthetase with relaxed tRNA specificity since it is able to aspartylate not only its cognate tRNA(Asp) but also tRNA(Asn). Reaction proceeds in two steps: L-aspartate is first activated by ATP to form Asp-AMP and then transferred to the acceptor end of tRNA(Asp/Asn). The sequence is that of Aspartate--tRNA(Asp/Asn) ligase from Ehrlichia ruminantium (strain Welgevonden).